A 387-amino-acid polypeptide reads, in one-letter code: Patatin-02 (387 aa).

An N-terminal signal peptide occupies residues 1–23; that stretch reads MATTKSFLILIVMILATTSSTFA. Positions 32–230 constitute a PNPLA domain; the sequence is LSIDGGGIKG…TVADPALLSV (199 aa). A GXGXXG motif is present at residues 36–41; it reads GGGIKG. Positions 75 to 79 match the GXSXG motif; the sequence is GTSTG. Catalysis depends on Ser-77, which acts as the Nucleophile. An N-linked (GlcNAc...) asparagine glycan is attached at Asn-115. Asp-216 acts as the Proton acceptor in catalysis. The DGA/G signature appears at 216–218; that stretch reads DGA. Residues 361–385 adopt a coiled-coil conformation; the sequence is ETYEEALKRFAKLLSDRKKLRANKA.

Belongs to the patatin family. Tuber and stolon.

The protein localises to the vacuole. Probable lipolytic acyl hydrolase (LAH), an activity which is thought to be involved in the response of tubers to pathogens. This Solanum tuberosum (Potato) protein is Patatin-02.